The following is a 224-amino-acid chain: MADS-box transcription factor 16 (224 aa).

The 61-residue stretch at 1-61 folds into the MADS-box domain; the sequence is MGRGKIEIKR…GKYHEFCSPS (61 aa). The 91-residue stretch at 84–174 folds into the K-box domain; sequence YENMQRTLSH…QQELGLREEP (91 aa).

As to quaternary structure, may interact with the K-box of MADS4, MADS6 and MADS8. May form a heterodimer with MADS4. Expressed in lodicules, stamens and carpels.

The protein resides in the nucleus. In terms of biological role, probable transcription factor involved in the development of floral organs. Required for normal development of lodicules and stamens (whorls 2 and 3). May function as a heterodimer with MADS4. The chain is MADS-box transcription factor 16 (MADS16) from Oryza sativa subsp. japonica (Rice).